A 307-amino-acid polypeptide reads, in one-letter code: Myeloid-associated differentiation marker-like protein 2 (307 aa).

MARVEL domains follow at residues 17-154 (AVTS…ARPG) and 159-303 (YMAT…RIRF). The next 7 helical transmembrane spans lie at 53-73 (FCMA…ACEF), 90-110 (AFAM…PLYF), 129-149 (LAAS…VALT), 163-183 (VSGL…GALV), 198-218 (VAVY…SVMG), 229-249 (RLVV…AVIW), and 278-298 (LVVA…LAYS).

Belongs to the MAL family.

The protein resides in the membrane. This chain is Myeloid-associated differentiation marker-like protein 2 (MYADML2), found in Homo sapiens (Human).